A 650-amino-acid chain; its full sequence is Putative F-box protein R757 (650 aa).

The F-box domain occupies 7–53; it reads FSVMESLPTELAYHVLSFIDFNSVVTYRLCSQESNNFIKSMLVFFPI.

This is Putative F-box protein R757 from Acanthamoeba polyphaga mimivirus (APMV).